A 515-amino-acid polypeptide reads, in one-letter code: Maturase K (515 aa).

The protein belongs to the intron maturase 2 family. MatK subfamily.

The protein localises to the plastid. It is found in the chloroplast. In terms of biological role, usually encoded in the trnK tRNA gene intron. Probably assists in splicing its own and other chloroplast group II introns. The chain is Maturase K from Pinus coulteri (Coulter pine).